The sequence spans 201 residues: MQIVFKATQRVEQGTGASRRLRRAGQIPGIIYGADTDAQAITVDHNELYHLLKKETFHASVLMIELEGAKHTVVLRDVQWHPYKQQVLHLDFQRIDAGHQLHLKVPLHFINNDTNPAVKLGGCMISHTMTELDIACLPANLPEFIEVDLQSLEAGQSIHVSQLKLPEGVEAVHHGEGDPVVATALTVKGGAAEATEGEVAA.

This sequence belongs to the bacterial ribosomal protein bL25 family. CTC subfamily. In terms of assembly, part of the 50S ribosomal subunit; part of the 5S rRNA/L5/L18/L25 subcomplex. Contacts the 5S rRNA. Binds to the 5S rRNA independently of L5 and L18.

This is one of the proteins that binds to the 5S RNA in the ribosome where it forms part of the central protuberance. The polypeptide is Large ribosomal subunit protein bL25 (Aromatoleum aromaticum (strain DSM 19018 / LMG 30748 / EbN1) (Azoarcus sp. (strain EbN1))).